The primary structure comprises 417 residues: Phosphoglycerate kinase 2 (417 aa).

(2R)-3-phosphoglycerate contacts are provided by Val23, Asp24, Phe25, Asn26, Asn38, Arg39, Ser62, His63, Gly65, Arg66, Leu121, Arg122, His168, and Arg169. Gly212 lines the ADP pocket. Gly212 serves as a coordination point for CDP. 2 residues coordinate AMP: Ala213 and Lys214. Ala213 contributes to the ATP binding site. Ala213 contacts Mg(2+). Asp217 contacts CDP. Residue Asp217 coordinates Mg(2+). Lys218 is a binding site for AMP. Lys218 contributes to the ATP binding site. Gly236 contributes to the ADP binding site. Position 236 (Gly236) interacts with CDP. Residues Gly237 and Gly312 each coordinate AMP. Residues Gly237 and Gly312 each coordinate ATP. The CDP site is built by Gly337 and Phe342. Phe342 contacts ADP. Residue Glu343 coordinates AMP. The ATP site is built by Glu343, Asp374, and Thr375. Asp374 provides a ligand contact to Mg(2+).

Belongs to the phosphoglycerate kinase family. In terms of assembly, monomer. It depends on Mg(2+) as a cofactor.

The protein resides in the cytoplasm. The protein localises to the mitochondrion. The enzyme catalyses (2R)-3-phosphoglycerate + ATP = (2R)-3-phospho-glyceroyl phosphate + ADP. Its pathway is carbohydrate degradation; glycolysis; pyruvate from D-glyceraldehyde 3-phosphate: step 2/5. Functionally, catalyzes one of the two ATP producing reactions in the glycolytic pathway via the reversible conversion of 1,3-diphosphoglycerate to 3-phosphoglycerate. Both L- and D- forms of purine and pyrimidine nucleotides can be used as substrates, but the activity is much lower on pyrimidines. Negatively regulates the biosynthesis of acetyl-CoA from pyruvate in the mitochondrion. In Rhizopus niveus, this protein is Phosphoglycerate kinase 2 (PGK2).